A 49-amino-acid chain; its full sequence is Venom peptide 3 (49 aa).

A signal peptide spans 1 to 23 (MRFTFVLVIAATVAVLGFFGINA). AXPX repeat units follow at residues 23–26 (AEPM) and 31–34 (AEPY). The propeptide occupies 24 to 37 (EPMPDPHAEPYPDA). The residue at position 48 (L48) is a Leucine amide.

In terms of tissue distribution, expressed by the venom gland.

It is found in the secreted. This chain is Venom peptide 3, found in Eumenes pomiformis (Potter wasp).